Here is a 483-residue protein sequence, read N- to C-terminus: Membrane-bound lytic murein transglycosylase F (483 aa).

A signal peptide spans 1–18; the sequence is MKGLIARFIAGFALLLWA. The interval 19 to 267 is non-LT domain; it reads WDMVFPWQQL…RIEEKYFNHL (249 aa). The interval 269–483 is LT domain; sequence HFDYVDIQSY…SKESDSTLKE (215 aa). The active site involves Glu-312. A disordered region spans residues 458-483; that stretch reads QQIQNNEEQPSVPQEISKESDSTLKE. Over residues 473-483 the composition is skewed to basic and acidic residues; the sequence is ISKESDSTLKE.

The protein in the N-terminal section; belongs to the bacterial solute-binding protein 3 family. It in the C-terminal section; belongs to the transglycosylase Slt family.

The protein resides in the cell outer membrane. The catalysed reaction is Exolytic cleavage of the (1-&gt;4)-beta-glycosidic linkage between N-acetylmuramic acid (MurNAc) and N-acetylglucosamine (GlcNAc) residues in peptidoglycan, from either the reducing or the non-reducing ends of the peptidoglycan chains, with concomitant formation of a 1,6-anhydrobond in the MurNAc residue.. Its function is as follows. Murein-degrading enzyme that degrades murein glycan strands and insoluble, high-molecular weight murein sacculi, with the concomitant formation of a 1,6-anhydromuramoyl product. Lytic transglycosylases (LTs) play an integral role in the metabolism of the peptidoglycan (PG) sacculus. Their lytic action creates space within the PG sacculus to allow for its expansion as well as for the insertion of various structures such as secretion systems and flagella. The chain is Membrane-bound lytic murein transglycosylase F from Actinobacillus pleuropneumoniae serotype 5b (strain L20).